The sequence spans 185 residues: CASP-like protein 2C1 (185 aa).

Topologically, residues 1-12 are cytoplasmic; sequence MVAARVSEVKAE. Residues 13-33 form a helical membrane-spanning segment; the sequence is GVLRGACAALAAAAALLVGLS. Residues 34 to 52 lie on the Extracellular side of the membrane; that stretch reads TQTETVLLVRKKATVKDVQ. Residues 53–73 traverse the membrane as a helical segment; sequence ALWVLAMAAAAAAGYHLLQLL. Topologically, residues 74–105 are cytoplasmic; the sequence is KCFYLGRRVGGGASPCRRSSRALAWTCLLLDK. The helical transmembrane segment at 106–126 threads the bilayer; it reads ACAYTTFATTVAAAQACVIAL. Residues 127–147 are Extracellular-facing; it reads DGAHALQWTKLCNIYTRFCEQ. The chain crosses the membrane as a helical span at residues 148–168; sequence IAGSLVLGMLAAVGTAVLSAA. Topologically, residues 169 to 185 are cytoplasmic; sequence SARNVFRHYSPGTYAAH.

It belongs to the Casparian strip membrane proteins (CASP) family. In terms of assembly, homodimer and heterodimers.

It localises to the cell membrane. This Sorghum bicolor (Sorghum) protein is CASP-like protein 2C1.